The primary structure comprises 174 residues: Transmembrane protein 208 (174 aa).

The next 3 membrane-spanning stretches (helical) occupy residues 30–50 (NMAI…FEVT), 54–74 (VFMH…MAFM), and 111–131 (GTLL…LAPI). Positions 151–174 (AQDDNPQVDEKKQKKMDRRMRRMR) are disordered. A compositionally biased stretch (basic residues) spans 163–174 (QKKMDRRMRRMR).

Belongs to the TMEM208 family. Interacts with fz. Expressed in the brain.

It is found in the endoplasmic reticulum membrane. May play an important role during development and helps to maintain proper levels of Fz. The chain is Transmembrane protein 208 from Drosophila melanogaster (Fruit fly).